The sequence spans 250 residues: DNA repair protein RecO (250 aa).

This sequence belongs to the RecO family.

Involved in DNA repair and RecF pathway recombination. This chain is DNA repair protein RecO, found in Lactobacillus helveticus (strain DPC 4571).